Consider the following 65-residue polypeptide: Large ribosomal subunit protein uL29 (65 aa).

This sequence belongs to the universal ribosomal protein uL29 family.

This chain is Large ribosomal subunit protein uL29, found in Psychrobacter arcticus (strain DSM 17307 / VKM B-2377 / 273-4).